The primary structure comprises 123 residues: UPF0102 protein Maqu_2464 (123 aa).

This sequence belongs to the UPF0102 family.

The protein is UPF0102 protein Maqu_2464 of Marinobacter nauticus (strain ATCC 700491 / DSM 11845 / VT8) (Marinobacter aquaeolei).